The chain runs to 508 residues: ATP synthase subunit alpha, chloroplastic (508 aa).

Residue 172-179 coordinates ATP; that stretch reads GDRQTGKT.

Belongs to the ATPase alpha/beta chains family. F-type ATPases have 2 components, CF(1) - the catalytic core - and CF(0) - the membrane proton channel. CF(1) has five subunits: alpha(3), beta(3), gamma(1), delta(1), epsilon(1). CF(0) has four main subunits: a, b, b' and c.

The protein localises to the plastid. Its subcellular location is the chloroplast thylakoid membrane. The enzyme catalyses ATP + H2O + 4 H(+)(in) = ADP + phosphate + 5 H(+)(out). Its function is as follows. Produces ATP from ADP in the presence of a proton gradient across the membrane. The alpha chain is a regulatory subunit. This Psilotum nudum (Whisk fern) protein is ATP synthase subunit alpha, chloroplastic.